A 525-amino-acid polypeptide reads, in one-letter code: MARKKGVKALLLNWRVLLLILFLIGSVVSMSIKGLTYGIDIGGGVALIAEPEKPVSKDTLNGIITSLQNRLNTFGVKDITIEAQHDPETGQSLIVVKIANVTLDEANQIKDLIESQGVLYMEFNGVIFATGTDVTVHSSDYGLDLQECPTCWYVGFELSGKAQNKFKKIAAGKLGWPIDIYLDPPVNSLLVVSPRVYQEMNSGDFMGAPSEGTPKPLVERLKEAFNITVVEYSNQTAEDIVENATALGKDKIILADVPEELYNDVRELVLSKDLKLRVSHYTPQQGEDLKDFVKRILNLYGPYVLKFDPAKGETTRLKLSGSAPTKEEALQEARKIYSVLRSGSLAVKLHVVSEEYISPTLGASFKKQAIIAGIGALIAVLLIVYFHYRRWRIAIPVASTSLFEVIIILGIAALIRWNLDLPSIAGIIAAIGTGVDQQIVITDELLGGTAGRVTRRMSALRRMARAFFIIFASAATTIVAMSFLLVYFVGTLKGFAVTTILGVLIGVLVTRPAYAEIAKYLLSLE.

The next 6 membrane-spanning stretches (helical) occupy residues 16 to 36, 368 to 388, 395 to 415, 421 to 441, 466 to 486, and 488 to 508; these read VLLL…KGLT, QAII…YFHY, IPVA…AALI, LPSI…QIVI, AFFI…FLLV, and FVGT…IGVL.

Belongs to the SecD/SecF family. SecD subfamily. In terms of assembly, part of the protein translocation apparatus. Forms a complex with SecF.

The protein resides in the cell membrane. In terms of biological role, involved in protein export. The chain is Protein-export membrane protein SecD from Thermococcus gammatolerans (strain DSM 15229 / JCM 11827 / EJ3).